The following is a 208-amino-acid chain: Regulator of G-protein signaling 4 (208 aa).

3 S-palmitoyl cysteine lipidation sites follow: cysteine 2, cysteine 12, and cysteine 95. Residues 62–178 (SLENLIHHDR…LKSPYLDLVS (117 aa)) form the RGS domain.

Palmitoylated on Cys-2 and/or Cys-12. In terms of processing, phosphorylated by cyclic GMP-dependent protein kinase. In terms of tissue distribution, expressed in the developing nervous system.

Its function is as follows. Inhibits signal transduction by increasing the GTPase activity of G protein alpha subunits thereby driving them into their inactive GDP-bound form. Activity on G(z)-alpha is inhibited by phosphorylation of the G-protein. Activity on G(z)-alpha and G(i)-alpha-1 is inhibited by palmitoylation of the G-protein. This Gallus gallus (Chicken) protein is Regulator of G-protein signaling 4 (RGS4).